A 155-amino-acid chain; its full sequence is MSRRGTAEEKTAKSDPIYRNRLVNMLVNRILKHGKKSLAYQILYRAMKNIQQKTETNPLSVLRQAIRGVTPDIAVKARRVGGSTHQVPVEIGSAQGKALAIRWLLGASRKRPGRNMAFKLSSELVDAAKGSGDAIRKKEETHRMAEANRAFAHFR.

It belongs to the universal ribosomal protein uS7 family. Part of the 30S ribosomal subunit.

The protein resides in the plastid. It is found in the chloroplast. Its function is as follows. One of the primary rRNA binding proteins, it binds directly to 16S rRNA where it nucleates assembly of the head domain of the 30S subunit. The chain is Small ribosomal subunit protein uS7cz/uS7cy (rps7-A) from Phaseolus vulgaris (Kidney bean).